Here is a 332-residue protein sequence, read N- to C-terminus: 4-hydroxy-3-methylbut-2-enyl diphosphate reductase (332 aa).

A [4Fe-4S] cluster-binding site is contributed by C34. Positions 63 and 96 each coordinate (2E)-4-hydroxy-3-methylbut-2-enyl diphosphate. The dimethylallyl diphosphate site is built by H63 and H96. The isopentenyl diphosphate site is built by H63 and H96. C118 serves as a coordination point for [4Fe-4S] cluster. Residue H146 coordinates (2E)-4-hydroxy-3-methylbut-2-enyl diphosphate. Residue H146 coordinates dimethylallyl diphosphate. H146 contacts isopentenyl diphosphate. E148 serves as the catalytic Proton donor. Position 186 (T186) interacts with (2E)-4-hydroxy-3-methylbut-2-enyl diphosphate. Position 216 (C216) interacts with [4Fe-4S] cluster. Residues S244, S245, N246, and S289 each contribute to the (2E)-4-hydroxy-3-methylbut-2-enyl diphosphate site. 4 residues coordinate dimethylallyl diphosphate: S244, S245, N246, and S289. Positions 244, 245, 246, and 289 each coordinate isopentenyl diphosphate.

The protein belongs to the IspH family. [4Fe-4S] cluster is required as a cofactor.

It catalyses the reaction isopentenyl diphosphate + 2 oxidized [2Fe-2S]-[ferredoxin] + H2O = (2E)-4-hydroxy-3-methylbut-2-enyl diphosphate + 2 reduced [2Fe-2S]-[ferredoxin] + 2 H(+). The catalysed reaction is dimethylallyl diphosphate + 2 oxidized [2Fe-2S]-[ferredoxin] + H2O = (2E)-4-hydroxy-3-methylbut-2-enyl diphosphate + 2 reduced [2Fe-2S]-[ferredoxin] + 2 H(+). The protein operates within isoprenoid biosynthesis; dimethylallyl diphosphate biosynthesis; dimethylallyl diphosphate from (2E)-4-hydroxy-3-methylbutenyl diphosphate: step 1/1. It participates in isoprenoid biosynthesis; isopentenyl diphosphate biosynthesis via DXP pathway; isopentenyl diphosphate from 1-deoxy-D-xylulose 5-phosphate: step 6/6. Functionally, catalyzes the conversion of 1-hydroxy-2-methyl-2-(E)-butenyl 4-diphosphate (HMBPP) into a mixture of isopentenyl diphosphate (IPP) and dimethylallyl diphosphate (DMAPP). Acts in the terminal step of the DOXP/MEP pathway for isoprenoid precursor biosynthesis. This is 4-hydroxy-3-methylbut-2-enyl diphosphate reductase from Mycolicibacterium paratuberculosis (strain ATCC BAA-968 / K-10) (Mycobacterium paratuberculosis).